The following is a 128-amino-acid chain: GESRAEKFQRQHMDSGSSPSSSSTYCNQMMKLRNMTQGSCKSVNTFVHEPLVDVQNVCFQEKVTCKNGQTNCFKSNSRMHITECRLTNGSKYPNCAYGTSPKERHIIVACEGSPYVPVHFDDSVEDST.

Residues Gly-1–Met-13 are compositionally biased toward basic and acidic residues. The disordered stretch occupies residues Gly-1 to Thr-24. Substrate-binding residues include Lys-7 and Arg-10. The Proton acceptor role is filled by His-12. 4 disulfides stabilise this stretch: Cys-26–Cys-84, Cys-40–Cys-95, Cys-58–Cys-110, and Cys-65–Cys-72. N-linked (GlcNAc...) asparagine glycosylation is present at Asn-34. Substrate is bound by residues Lys-41–Thr-45, Lys-66, and Arg-85. The active-site Proton donor is the His-119.

This sequence belongs to the pancreatic ribonuclease family. In terms of assembly, monomer. Interacts with and forms tight 1:1 complexes with RNH1. Dimerization of two such complexes may occur. Interaction with RNH1 inhibits this protein. In terms of tissue distribution, pancreas and other tissues and body fluids (indicating it may have other physiological functions besides its role in digestion).

It is found in the secreted. The catalysed reaction is an [RNA] containing cytidine + H2O = an [RNA]-3'-cytidine-3'-phosphate + a 5'-hydroxy-ribonucleotide-3'-[RNA].. It catalyses the reaction an [RNA] containing uridine + H2O = an [RNA]-3'-uridine-3'-phosphate + a 5'-hydroxy-ribonucleotide-3'-[RNA].. Its function is as follows. Endonuclease that catalyzes the cleavage of RNA on the 3' side of pyrimidine nucleotides. Acts on single-stranded and double-stranded RNA. The sequence is that of Ribonuclease pancreatic (RNASE1) from Semnopithecus entellus (Northern plains gray langur).